The primary structure comprises 487 residues: Protein translocase subunit SecY (487 aa).

Residues 1–20 are Cytoplasmic-facing; sequence MSWKDTAEPLLVRMPAVQRP. A helical transmembrane segment spans residues 21 to 47; sequence EGHVPFKRKLTWTGGVLLLYFFLTNVK. The Extracellular segment spans residues 48–59; the sequence is LFGLDIDASQQV. An intramembrane region (helical) is located at residues 60–67; it reads FGRFSSIL. A discontinuously helical transmembrane segment spans residues 60–88; it reads FGRFSSILASGQGSIMQLGIGPIVTASIV. An intramembrane segment occupies 68–79; that stretch reads ASGQGSIMQLGI. An intramembrane region (helical) is located at residues 80–88; sequence GPIVTASIV. The Cytoplasmic portion of the chain corresponds to 89-110; it reads LQLLGGADLLGLNTQDDPRDQI. Residues 111–135 form a helical membrane-spanning segment; sequence LYQGLQKLLVLVMICLTGLPMVFAG. At 136–153 the chain is on the extracellular side; it reads GFLPADTAVANSLGIGTA. A helical transmembrane segment spans residues 154-178; sequence GVQWLIFAQMFVGGVLILFMDEVIS. The Cytoplasmic portion of the chain corresponds to 179 to 184; that stretch reads KWGVGS. Residues 185–203 form a helical membrane-spanning segment; sequence GIGLFIVAGVSQRLVGGLL. Residues 204–244 lie on the Extracellular side of the membrane; it reads TAPFLGNSEGIIYTWYLFITGERGTGPVLAADGLQTVLLQG. Residues 245-266 form a helical membrane-spanning segment; it reads ELLGLFTTVLIFAVVVYAESVR. At 267–291 the chain is on the cytoplasmic side; sequence VEIPLSNARVKGARGRFPVKLIYAS. The chain crosses the membrane as a helical span at residues 292–313; sequence VLPMILVRALQANIQFLGRILN. Residues 314 to 364 are Extracellular-facing; it reads AQLGSMPAFLGTYANGQPTGGLFYFLAPIQSRGDWMWWLEGTAQPVWQILT. A helical transmembrane segment spans residues 365 to 384; that stretch reads RVGIDLFVMLVGGAVFAVFW. Residues 385–427 lie on the Cytoplasmic side of the membrane; sequence VETTDMGPEATAKQIHNSGMQIPGFRQNVGVIEKVLERYIPQV. The chain crosses the membrane as a helical span at residues 428 to 446; sequence TVIGGALVGLLAVMANMLG. The Extracellular portion of the chain corresponds to 447 to 451; it reads TIGGV. The helical transmembrane segment at 452–466 threads the bilayer; that stretch reads SGTGLLLTVSITYKL. The Cytoplasmic portion of the chain corresponds to 467-487; sequence YEEIAEEQLMEMHPMMRQMFG.

This sequence belongs to the SecY/SEC61-alpha family. In terms of assembly, component of the Sec protein translocase complex. Heterotrimer consisting of alpha (SecY), beta (SecG) and gamma (SecE) subunits. The heterotrimers can form oligomers, although 1 heterotrimer is thought to be able to translocate proteins. Interacts with the ribosome. May interact with SecDF, and other proteins may be involved.

It localises to the cell membrane. Its function is as follows. The central subunit of the protein translocation channel SecYEG. Consists of two halves formed by TMs 1-5 and 6-10. These two domains form a lateral gate at the front which open onto the bilayer between TMs 2 and 7, and are clamped together by SecE at the back. The channel is closed by both a pore ring composed of hydrophobic SecY resides and a short helix (helix 2A) on the extracellular side of the membrane which forms a plug. The plug probably moves laterally to allow the channel to open. The ring and the pore may move independently. The chain is Protein translocase subunit SecY from Haloarcula marismortui (strain ATCC 43049 / DSM 3752 / JCM 8966 / VKM B-1809) (Halobacterium marismortui).